The sequence spans 510 residues: E3 ubiquitin-protein ligase TRIM7 (510 aa).

The RING-type zinc finger occupies 29 to 81 (CSICLEFFREPVSVECGHSFCRACIMRCWERPGAGTGTATRTLPCPLPCPQCR). Ser106 carries the post-translational modification Phosphoserine; by RPS6KA5. The segment at 124 to 165 (AAAARCSQHGEQLKLYCQDDGRAICVVCDRAREHRSHAVLPL) adopts a B box-type zinc-finger fold. The Zn(2+) site is built by Cys129, His132, Cys151, and His157. Residues 165-275 (LEEAVQEAKE…SGQIQETAQK (111 aa)) are a coiled coil. Positions 323-510 (LLKKFKEDLQ…STGTYLRIWP (188 aa)) constitute a B30.2/SPRY domain.

It belongs to the TRIM/RBCC family. Forms homodimers. Interacts with GNIP2. Interacts with GYG1. Interacts with RNF187 (via C-terminus). Post-translationally, phosphorylated at Ser-106 by RPS6KA5/MSK1, which stimulates the ubiquitin ligase activity. In terms of processing, auto-ubiquitinates via 'Lys-63'-linked polyubiquitination. In terms of tissue distribution, highly expressed in antigen-presenting cells.

The protein resides in the nucleus. Its subcellular location is the cytoplasm. It localises to the golgi apparatus. The enzyme catalyses S-ubiquitinyl-[E2 ubiquitin-conjugating enzyme]-L-cysteine + [acceptor protein]-L-lysine = [E2 ubiquitin-conjugating enzyme]-L-cysteine + N(6)-ubiquitinyl-[acceptor protein]-L-lysine.. Its pathway is protein modification; protein ubiquitination. Functionally, E3 ubiquitin-protein ligase that have both tumor-promoting and tumor-suppressing activities and functions in several biological processes including innate immunity, regulation of ferroptosis as well as cell proliferation and migration. Acts as an antiviral effector against multiple viruses by targeting specific viral proteins for ubiquitination and degradation including norovirus NTPase protein. Mechanistically, recognizes the C-terminal glutamine-containing motif generated by viral proteases that process the polyproteins and trigger their ubiquitination and subsequent degradation. Mediates 'Lys-63'-linked polyubiquitination and stabilization of the JUN coactivator RNF187 in response to growth factor signaling via the MEK/ERK pathway, thereby regulating JUN transactivation and cellular proliferation. Promotes the TLR4-mediated signaling activation through its E3 ligase domain leading to production of pro-inflammatory cytokines and type I interferon. Also plays a negative role in the regulation of exogenous cytosolic DNA virus-triggered immune response. Mechanistically, enhances the 'Lys-48'-linked ubiquitination of STING1 leading to its proteasome-dependent degradation. Mediates the ubiquitination of the SIN3-HDAC chromatin remodeling complex component BRMS1. Modulates NCOA4-mediated ferritinophagy and ferroptosis in glioblastoma cells by ubiquitinating NCOA4, leading to its degradation. This chain is E3 ubiquitin-protein ligase TRIM7 (Trim7), found in Mus musculus (Mouse).